The sequence spans 370 residues: DNA replication and repair protein RecF (370 aa).

Residue 30-37 (GENAQGKT) coordinates ATP.

The protein belongs to the RecF family.

Its subcellular location is the cytoplasm. In terms of biological role, the RecF protein is involved in DNA metabolism; it is required for DNA replication and normal SOS inducibility. RecF binds preferentially to single-stranded, linear DNA. It also seems to bind ATP. The polypeptide is DNA replication and repair protein RecF (Staphylococcus aureus (strain USA300)).